We begin with the raw amino-acid sequence, 449 residues long: 23S rRNA (uracil(1939)-C(5))-methyltransferase RlmD (449 aa).

A TRAM domain is found at 12–70 (SKQLSAKQSFSVHQLDHLGAGIAQHQGKVVFIPGALPSETVQAQLTEQKKNYARAKLIK). Residues C83, C89, C92, and C170 each coordinate [4Fe-4S] cluster. The S-adenosyl-L-methionine site is built by Q282, F311, N316, E332, D359, and D379. C405 acts as the Nucleophile in catalysis.

Belongs to the class I-like SAM-binding methyltransferase superfamily. RNA M5U methyltransferase family. RlmD subfamily.

It carries out the reaction uridine(1939) in 23S rRNA + S-adenosyl-L-methionine = 5-methyluridine(1939) in 23S rRNA + S-adenosyl-L-homocysteine + H(+). In terms of biological role, catalyzes the formation of 5-methyl-uridine at position 1939 (m5U1939) in 23S rRNA. The protein is 23S rRNA (uracil(1939)-C(5))-methyltransferase RlmD of Shewanella sp. (strain MR-4).